We begin with the raw amino-acid sequence, 56 residues long: Large ribosomal subunit protein eL37 (56 aa).

4 residues coordinate Zn(2+): C19, C22, C34, and C37. The C4-type zinc finger occupies 19-37 (CRRCGSVSLNVHTKQCTSC).

Belongs to the eukaryotic ribosomal protein eL37 family. Requires Zn(2+) as cofactor.

Functionally, binds to the 23S rRNA. In Methanosarcina mazei (strain ATCC BAA-159 / DSM 3647 / Goe1 / Go1 / JCM 11833 / OCM 88) (Methanosarcina frisia), this protein is Large ribosomal subunit protein eL37.